An 80-amino-acid polypeptide reads, in one-letter code: Large ribosomal subunit protein uL30 (80 aa).

The protein belongs to the universal ribosomal protein uL30 family. As to quaternary structure, part of the 50S ribosomal subunit.

The polypeptide is Large ribosomal subunit protein uL30 (Vesicomyosocius okutanii subsp. Calyptogena okutanii (strain HA)).